The chain runs to 300 residues: 33 kDa chaperonin (300 aa).

Disulfide bonds link Cys240–Cys242 and Cys273–Cys276.

This sequence belongs to the HSP33 family. Post-translationally, under oxidizing conditions two disulfide bonds are formed involving the reactive cysteines. Under reducing conditions zinc is bound to the reactive cysteines and the protein is inactive.

It localises to the cytoplasm. In terms of biological role, redox regulated molecular chaperone. Protects both thermally unfolding and oxidatively damaged proteins from irreversible aggregation. Plays an important role in the bacterial defense system toward oxidative stress. This chain is 33 kDa chaperonin, found in Cyanothece sp. (strain PCC 7425 / ATCC 29141).